The sequence spans 793 residues: Serine/threonine-protein kinase CLA4 (793 aa).

Positions 8–27 (RELSESDFQDIGPAPKPPPV) are disordered. In terms of domain architecture, PH spans 56-168 (QRKKSGWVSY…WLDSIFSKCP (113 aa)). Residues 173–186 (VSSPTNFTHKVHVG) enclose the CRIB domain. 2 disordered regions span residues 243 to 369 (AAAQ…ESPT) and 383 to 476 (QKQL…RPTM). Composition is skewed to polar residues over residues 258-276 (TLSSNSSQASMQQIASTPP), 312-337 (GVTTSPSVHHQNTQHGKQQSPTQSGP), and 355-369 (LGNSVSSVATKESPT). One can recognise a Protein kinase domain in the interval 498-776 (FQMIEKAGQG…TEELLHHSFF (279 aa)). ATP is bound by residues 504–512 (AGQGASGSV) and Lys-545. Asp-644 acts as the Proton acceptor in catalysis.

The protein belongs to the protein kinase superfamily. STE Ser/Thr protein kinase family. STE20 subfamily.

It catalyses the reaction L-seryl-[protein] + ATP = O-phospho-L-seryl-[protein] + ADP + H(+). The enzyme catalyses L-threonyl-[protein] + ATP = O-phospho-L-threonyl-[protein] + ADP + H(+). Its function is as follows. Required for hyphal maturation and for septation. This chain is Serine/threonine-protein kinase CLA4 (CLA4), found in Eremothecium gossypii (strain ATCC 10895 / CBS 109.51 / FGSC 9923 / NRRL Y-1056) (Yeast).